Here is a 512-residue protein sequence, read N- to C-terminus: 2,3-bisphosphoglycerate-independent phosphoglycerate mutase (512 aa).

Positions 18 and 68 each coordinate Mn(2+). Ser-68 serves as the catalytic Phosphoserine intermediate. Residues His-129, 159–160 (RD), Arg-191, Arg-197, 265–268 (RPDR), and Lys-338 each bind substrate. Asp-403, His-407, Asp-444, His-445, and His-462 together coordinate Mn(2+).

This sequence belongs to the BPG-independent phosphoglycerate mutase family. In terms of assembly, monomer. Requires Mn(2+) as cofactor.

The catalysed reaction is (2R)-2-phosphoglycerate = (2R)-3-phosphoglycerate. It functions in the pathway carbohydrate degradation; glycolysis; pyruvate from D-glyceraldehyde 3-phosphate: step 3/5. In terms of biological role, catalyzes the interconversion of 2-phosphoglycerate and 3-phosphoglycerate. This chain is 2,3-bisphosphoglycerate-independent phosphoglycerate mutase, found in Mesomycoplasma hyopneumoniae (strain 232) (Mycoplasma hyopneumoniae).